Reading from the N-terminus, the 151-residue chain is Minor capsid protein P12 (151 aa).

Hydrophobic regions lie at residues 23–43 and 46–66; these read FIFFIYFNFTNENIYIIYTIY and VQNTIVYIVLLLIVVVIIWNF. The cysteines at positions 112 and 120 are disulfide-linked.

In terms of assembly, interacts with the major capsid protein.

Its subcellular location is the virion. One of the minor capsid proteins that constitute a network internal to the major capsid proteins and outside the lipid membrane. The minor capsid protein P12 does not serve a cross-linking function between neighboring capsomers, it may play a role in the viral capsid assembly. This chain is Minor capsid protein P12, found in Paramecium bursaria Chlorella virus 1 (PBCV-1).